Here is a 796-residue protein sequence, read N- to C-terminus: Protein translocase subunit SecA 2 (796 aa).

ATP contacts are provided by residues Gln-84, 102-106, and Asp-496; that span reads GEGKT.

Belongs to the SecA family. In terms of assembly, monomer and homodimer. Part of the essential Sec protein translocation apparatus which comprises SecA, SecYEG and auxiliary proteins SecDF. Other proteins may also be involved.

It localises to the cell membrane. The protein localises to the cytoplasm. The enzyme catalyses ATP + H2O + cellular proteinSide 1 = ADP + phosphate + cellular proteinSide 2.. In terms of biological role, part of the Sec protein translocase complex. Interacts with the SecYEG preprotein conducting channel. Has a central role in coupling the hydrolysis of ATP to the transfer of proteins into and across the cell membrane, serving as an ATP-driven molecular motor driving the stepwise translocation of polypeptide chains across the membrane. In Staphylococcus haemolyticus (strain JCSC1435), this protein is Protein translocase subunit SecA 2.